A 428-amino-acid chain; its full sequence is 3-phosphoshikimate 1-carboxyvinyltransferase (428 aa).

The 3-phosphoshikimate site is built by Lys23, Ser24, and Arg28. Lys23 serves as a coordination point for phosphoenolpyruvate. 2 residues coordinate phosphoenolpyruvate: Gly97 and Arg125. The 3-phosphoshikimate site is built by Ser170, Ser171, Gln172, Ser198, Asp314, Asn337, and Lys341. Residue Gln172 participates in phosphoenolpyruvate binding. Asp314 acts as the Proton acceptor in catalysis. Arg345, Arg387, and Lys412 together coordinate phosphoenolpyruvate.

Belongs to the EPSP synthase family. As to quaternary structure, monomer.

The protein resides in the cytoplasm. It catalyses the reaction 3-phosphoshikimate + phosphoenolpyruvate = 5-O-(1-carboxyvinyl)-3-phosphoshikimate + phosphate. Its pathway is metabolic intermediate biosynthesis; chorismate biosynthesis; chorismate from D-erythrose 4-phosphate and phosphoenolpyruvate: step 6/7. Functionally, catalyzes the transfer of the enolpyruvyl moiety of phosphoenolpyruvate (PEP) to the 5-hydroxyl of shikimate-3-phosphate (S3P) to produce enolpyruvyl shikimate-3-phosphate and inorganic phosphate. In Serratia proteamaculans (strain 568), this protein is 3-phosphoshikimate 1-carboxyvinyltransferase.